A 373-amino-acid chain; its full sequence is Dual-specificity RNA methyltransferase RlmN (373 aa).

Glu-94 (proton acceptor) is an active-site residue. Residues 100-339 (EDDRATLCVS…VIVRKTRGDD (240 aa)) form the Radical SAM core domain. The cysteines at positions 107 and 344 are disulfide-linked. The [4Fe-4S] cluster site is built by Cys-114, Cys-118, and Cys-121. Residues 168 to 169 (GE), Ser-200, 222 to 224 (SIH), and Asn-301 each bind S-adenosyl-L-methionine. Cys-344 functions as the S-methylcysteine intermediate in the catalytic mechanism.

The protein belongs to the radical SAM superfamily. RlmN family. [4Fe-4S] cluster is required as a cofactor.

The protein resides in the cytoplasm. It carries out the reaction adenosine(2503) in 23S rRNA + 2 reduced [2Fe-2S]-[ferredoxin] + 2 S-adenosyl-L-methionine = 2-methyladenosine(2503) in 23S rRNA + 5'-deoxyadenosine + L-methionine + 2 oxidized [2Fe-2S]-[ferredoxin] + S-adenosyl-L-homocysteine. It catalyses the reaction adenosine(37) in tRNA + 2 reduced [2Fe-2S]-[ferredoxin] + 2 S-adenosyl-L-methionine = 2-methyladenosine(37) in tRNA + 5'-deoxyadenosine + L-methionine + 2 oxidized [2Fe-2S]-[ferredoxin] + S-adenosyl-L-homocysteine. Specifically methylates position 2 of adenine 2503 in 23S rRNA and position 2 of adenine 37 in tRNAs. m2A2503 modification seems to play a crucial role in the proofreading step occurring at the peptidyl transferase center and thus would serve to optimize ribosomal fidelity. The polypeptide is Dual-specificity RNA methyltransferase RlmN (Shewanella sp. (strain MR-4)).